A 490-amino-acid polypeptide reads, in one-letter code: Betaine aldehyde dehydrogenase (490 aa).

Position 93 (N93) interacts with K(+). An NAD(+)-binding site is contributed by 150–152 (GAW). K162 serves as the catalytic Charge relay system. 176–179 (KPSE) is a binding site for NAD(+). K(+) is bound at residue V180. 230–233 (GTAT) is an NAD(+) binding site. L246 contributes to the K(+) binding site. E252 serves as the catalytic Proton acceptor. NAD(+) is bound by residues G254, C286, and E387. Residue C286 is the Nucleophile of the active site. The residue at position 286 (C286) is a Cysteine sulfenic acid (-SOH). K(+)-binding residues include K457 and G460. The active-site Charge relay system is E464.

This sequence belongs to the aldehyde dehydrogenase family. As to quaternary structure, dimer of dimers. K(+) is required as a cofactor.

It carries out the reaction betaine aldehyde + NAD(+) + H2O = glycine betaine + NADH + 2 H(+). It participates in amine and polyamine biosynthesis; betaine biosynthesis via choline pathway; betaine from betaine aldehyde: step 1/1. Its function is as follows. Involved in the biosynthesis of the osmoprotectant glycine betaine. Catalyzes the irreversible oxidation of betaine aldehyde to the corresponding acid. This is Betaine aldehyde dehydrogenase from Xanthomonas campestris pv. campestris (strain ATCC 33913 / DSM 3586 / NCPPB 528 / LMG 568 / P 25).